The chain runs to 176 residues: Ribosome maturation factor RimM (176 aa).

Residues 99-176 enclose the PRC barrel domain; that stretch reads EDEYYWSDLV…RMVVDWERDF (78 aa).

This sequence belongs to the RimM family. In terms of assembly, binds ribosomal protein uS19.

The protein localises to the cytoplasm. An accessory protein needed during the final step in the assembly of 30S ribosomal subunit, possibly for assembly of the head region. Essential for efficient processing of 16S rRNA. May be needed both before and after RbfA during the maturation of 16S rRNA. It has affinity for free ribosomal 30S subunits but not for 70S ribosomes. The protein is Ribosome maturation factor RimM of Psychrobacter sp. (strain PRwf-1).